Here is a 232-residue protein sequence, read N- to C-terminus: MAKELIGNDWDKVLDPVFASDKYHELHNFLKEEYSNKRIFPDMYHIFTAFKLTPFNKTKVVILGQDPYHNPGQANGMSFSVMPGTPLPPSLRNIYKELYDDVGVRPVNHGYLKKWADQGVLLLNAVLTVPYAHANGHQGKGWEDVTDTAIKALSERGKVVFILWGRFAQNKIPLIDQSKNFIIKSSHPSPFSADRGFFGSRPFSRCNTALLNFGETPIDWQLSETVNKSDLA.

D66 (proton acceptor) is an active-site residue.

This sequence belongs to the uracil-DNA glycosylase (UDG) superfamily. UNG family.

The protein localises to the cytoplasm. The enzyme catalyses Hydrolyzes single-stranded DNA or mismatched double-stranded DNA and polynucleotides, releasing free uracil.. Its function is as follows. Excises uracil residues from the DNA which can arise as a result of misincorporation of dUMP residues by DNA polymerase or due to deamination of cytosine. This is Uracil-DNA glycosylase from Lactobacillus helveticus (strain DPC 4571).